The sequence spans 509 residues: Transcription factor atf-7 (509 aa).

The span at 283 to 303 shows a compositional bias: polar residues; the sequence is TVSSYHSPLGASSQPPSTQKS. 2 disordered regions span residues 283–318 and 337–400; these read TVSS…EKQI and NMSS…ILER. A compositionally biased stretch (basic and acidic residues) spans 308-318; that stretch reads SWDHINGEKQI. Residues 337-364 are compositionally biased toward low complexity; that stretch reads NMSSSGSDQDQSADMSNAGSTASTSTGN. Positions 390–400 are enriched in basic and acidic residues; the sequence is PDERRNTILER. The bZIP domain occupies 391–464; the sequence is DERRNTILER…TERESRCVCL (74 aa). Positions 393–413 are basic motif; sequence RRNTILERNKAAAVRYRKRKK. The tract at residues 419–450 is leucine-zipper; the sequence is MMGRVQAMEAEKNQLLAIQTQNQVLRRELERV.

It belongs to the bZIP family. Interacts with serine/threonine kinase pmk-1; perhaps in a manner dependent on dual specificity protein kinase sek-1. Expressed in intestinal cells.

The protein localises to the nucleus. It localises to the chromosome. In terms of biological role, transcription factor which regulates the transcription of various genes, including those involved in innate immunity and oxidative stress responses. Binds to promoter regions of genes, probably at 5'-[GACGTCA]-3' consensus sequences. Together with transcription factor daf-19, involved in regulation of the serotonergic response of ADF neurons to pathogenic food. Modulates response to infection by the Gram-negative bacterium P.aeruginosa, acting downstream of the p38 signal transduction pathway effector serine/threonine kinase pmk-1. May act with transcription factor elt-2 to control p38 gene induction in response to bacterial infection. May be phosphorylated by pmk-1. Regulates transcription of the metallothionein gene, mtl-1, perhaps acting downstream of pmk-1. The chain is Transcription factor atf-7 from Caenorhabditis elegans.